We begin with the raw amino-acid sequence, 244 residues long: Mitochondrial import inner membrane translocase subunit Tim21 (244 aa).

Residues 1 to 18 constitute a mitochondrion transit peptide; that stretch reads MICTLLRAVRCTERLHGC. The tract at residues 69-89 is disordered; it reads VRSPQSAKEDGSKQVSVHRSQ. A helical membrane pass occupies residues 108-128; the sequence is FTYLIVVLIGISITGGLFYTI.

Belongs to the TIM21 family. In terms of assembly, component of the TIM23 complex. Component of the MITRAC (mitochondrial translation regulation assembly intermediate of cytochrome c oxidase complex) complex, the core components of this complex being COA3/MITRAC12 and COX14. Interacts with COA3 and MT-CO1/COX1.

The protein resides in the mitochondrion membrane. Participates in the translocation of transit peptide-containing proteins across the mitochondrial inner membrane. Also required for assembly of mitochondrial respiratory chain complex I and complex IV as component of the MITRAC (mitochondrial translation regulation assembly intermediate of cytochrome c oxidase complex) complex. Probably shuttles between the presequence translocase and respiratory-chain assembly intermediates in a process that promotes incorporation of early nuclear-encoded subunits into these complexes. The protein is Mitochondrial import inner membrane translocase subunit Tim21 (TIMM21) of Bos taurus (Bovine).